The following is a 567-amino-acid chain: Proline--tRNA ligase (567 aa).

The protein belongs to the class-II aminoacyl-tRNA synthetase family. ProS type 1 subfamily. Homodimer.

The protein resides in the cytoplasm. The enzyme catalyses tRNA(Pro) + L-proline + ATP = L-prolyl-tRNA(Pro) + AMP + diphosphate. Functionally, catalyzes the attachment of proline to tRNA(Pro) in a two-step reaction: proline is first activated by ATP to form Pro-AMP and then transferred to the acceptor end of tRNA(Pro). As ProRS can inadvertently accommodate and process non-cognate amino acids such as alanine and cysteine, to avoid such errors it has two additional distinct editing activities against alanine. One activity is designated as 'pretransfer' editing and involves the tRNA(Pro)-independent hydrolysis of activated Ala-AMP. The other activity is designated 'posttransfer' editing and involves deacylation of mischarged Ala-tRNA(Pro). The misacylated Cys-tRNA(Pro) is not edited by ProRS. The chain is Proline--tRNA ligase from Staphylococcus aureus (strain bovine RF122 / ET3-1).